Here is a 202-residue protein sequence, read N- to C-terminus: Methylthioribulose-1-phosphate dehydratase (202 aa).

Residues histidine 93 and histidine 95 each coordinate Zn(2+).

Belongs to the aldolase class II family. MtnB subfamily. Requires Zn(2+) as cofactor.

The catalysed reaction is 5-(methylsulfanyl)-D-ribulose 1-phosphate = 5-methylsulfanyl-2,3-dioxopentyl phosphate + H2O. The protein operates within amino-acid biosynthesis; L-methionine biosynthesis via salvage pathway; L-methionine from S-methyl-5-thio-alpha-D-ribose 1-phosphate: step 2/6. Catalyzes the dehydration of methylthioribulose-1-phosphate (MTRu-1-P) into 2,3-diketo-5-methylthiopentyl-1-phosphate (DK-MTP-1-P). This Klebsiella pneumoniae (strain 342) protein is Methylthioribulose-1-phosphate dehydratase.